We begin with the raw amino-acid sequence, 364 residues long: N-acetyl-gamma-glutamyl-phosphate reductase (364 aa).

Residue Cys157 is part of the active site.

It belongs to the NAGSA dehydrogenase family. Type 1 subfamily.

The protein resides in the cytoplasm. The catalysed reaction is N-acetyl-L-glutamate 5-semialdehyde + phosphate + NADP(+) = N-acetyl-L-glutamyl 5-phosphate + NADPH + H(+). The protein operates within amino-acid biosynthesis; L-arginine biosynthesis; N(2)-acetyl-L-ornithine from L-glutamate: step 3/4. Catalyzes the NADPH-dependent reduction of N-acetyl-5-glutamyl phosphate to yield N-acetyl-L-glutamate 5-semialdehyde. The chain is N-acetyl-gamma-glutamyl-phosphate reductase from Bifidobacterium animalis subsp. lactis (strain AD011).